Reading from the N-terminus, the 151-residue chain is Cytochrome c oxidase subunit 5B, mitochondrial (151 aa).

Residues 1 to 17 (MLRTSLTKGARLTGTRF) constitute a mitochondrion transit peptide. Residues 18–85 (VQTKALSKAT…EWGPRRPVHG (68 aa)) are Mitochondrial matrix-facing. Residues 86–108 (KGDVAFITKGVFLGLGISFGLFG) traverse the membrane as a helical segment. Over 109-151 (LVRLLANPETPKTMNREWQLKSDEYLKSKNANPWGGYSQVQSK) the chain is Mitochondrial intermembrane.

Belongs to the cytochrome c oxidase IV family. In terms of assembly, component of the cytochrome c oxidase (complex IV, CIV), a multisubunit enzyme composed of 12 subunits. The complex is composed of a catalytic core of 3 subunits COX1, COX2 and COX3, encoded in the mitochondrial DNA, and 9 supernumerary subunits COX4, COX5A (or COX5B), COX6, COX7, COX8, COX9, COX12, COX13 and COX26, which are encoded in the nuclear genome. COX5A is the predominant subunit V during aerobic/normoxic growth, it gets replaced by COX5B under anaerobic/hypoxic conditions. The complex exists as a monomer or a dimer and forms supercomplexes (SCs) in the inner mitochondrial membrane with a dimer of ubiquinol-cytochrome c oxidoreductase (cytochrome b-c1 complex, complex III, CIII), resulting in 2 different assemblies (supercomplexes III(2)IV and III(2)IV(2)).

It is found in the mitochondrion inner membrane. The protein operates within energy metabolism; oxidative phosphorylation. In terms of biological role, component of the cytochrome c oxidase, the last enzyme in the mitochondrial electron transport chain which drives oxidative phosphorylation. The respiratory chain contains 3 multisubunit complexes succinate dehydrogenase (complex II, CII), ubiquinol-cytochrome c oxidoreductase (cytochrome b-c1 complex, complex III, CIII) and cytochrome c oxidase (complex IV, CIV), that cooperate to transfer electrons derived from NADH and succinate to molecular oxygen, creating an electrochemical gradient over the inner membrane that drives transmembrane transport and the ATP synthase. Cytochrome c oxidase is the component of the respiratory chain that catalyzes the reduction of oxygen to water. Electrons originating from reduced cytochrome c in the intermembrane space (IMS) are transferred via the dinuclear copper A center (CU(A)) of COX2 and heme A of COX1 to the active site in COX1, a binuclear center (BNC) formed by heme A3 and copper B (CU(B)). The BNC reduces molecular oxygen to 2 water molecules using 4 electrons from cytochrome c in the IMS and 4 protons from the mitochondrial matrix. This chain is Cytochrome c oxidase subunit 5B, mitochondrial (COX5B), found in Saccharomyces cerevisiae (strain ATCC 204508 / S288c) (Baker's yeast).